The following is a 777-amino-acid chain: Endonuclease MutS2 (777 aa).

328 to 335 is a binding site for ATP; sequence GPNTGGKT. A Smr domain is found at 702–777; the sequence is LDLRGKRYEE…GSGATIVIFK (76 aa).

It belongs to the DNA mismatch repair MutS family. MutS2 subfamily. In terms of assembly, homodimer. Binds to stalled ribosomes, contacting rRNA.

Functionally, endonuclease that is involved in the suppression of homologous recombination and thus may have a key role in the control of bacterial genetic diversity. In terms of biological role, acts as a ribosome collision sensor, splitting the ribosome into its 2 subunits. Detects stalled/collided 70S ribosomes which it binds and splits by an ATP-hydrolysis driven conformational change. Acts upstream of the ribosome quality control system (RQC), a ribosome-associated complex that mediates the extraction of incompletely synthesized nascent chains from stalled ribosomes and their subsequent degradation. Probably generates substrates for RQC. The chain is Endonuclease MutS2 from Streptococcus gordonii (strain Challis / ATCC 35105 / BCRC 15272 / CH1 / DL1 / V288).